We begin with the raw amino-acid sequence, 377 residues long: Alanine racemase (377 aa).

The Proton acceptor; specific for D-alanine role is filled by Lys37. The residue at position 37 (Lys37) is an N6-(pyridoxal phosphate)lysine. Arg135 is a substrate binding site. Catalysis depends on Tyr271, which acts as the Proton acceptor; specific for L-alanine. Residue Met319 coordinates substrate.

This sequence belongs to the alanine racemase family. It depends on pyridoxal 5'-phosphate as a cofactor.

The catalysed reaction is L-alanine = D-alanine. Its pathway is amino-acid biosynthesis; D-alanine biosynthesis; D-alanine from L-alanine: step 1/1. Functionally, catalyzes the interconversion of L-alanine and D-alanine. May also act on other amino acids. The chain is Alanine racemase (alr) from Helicobacter pylori (strain P12).